We begin with the raw amino-acid sequence, 113 residues long: T cell receptor alpha variable 8-4 (113 aa).

The first 20 residues, 1–20 (MLLLLVPVLEVIFTLGGTRA), serve as a signal peptide directing secretion. An Ig-like domain is found at 21-113 (QSVTQLGSHV…DAAEYFCAVS (93 aa)). Residues Cys-42 and Cys-110 are joined by a disulfide bond. An N-linked (GlcNAc...) asparagine glycan is attached at Asn-43.

As to quaternary structure, alpha-beta TR is a heterodimer composed of an alpha and beta chain; disulfide-linked. The alpha-beta TR is associated with the transmembrane signaling CD3 coreceptor proteins to form the TR-CD3 (TcR or TCR). The assembly of alpha-beta TR heterodimers with CD3 occurs in the endoplasmic reticulum where a single alpha-beta TR heterodimer associates with one CD3D-CD3E heterodimer, one CD3G-CD3E heterodimer and one CD247 homodimer forming a stable octameric structure. CD3D-CD3E and CD3G-CD3E heterodimers preferentially associate with TR alpha and TR beta chains, respectively. The association of the CD247 homodimer is the last step of TcR assembly in the endoplasmic reticulum and is required for transport to the cell surface.

Its subcellular location is the cell membrane. Its function is as follows. V region of the variable domain of T cell receptor (TR) alpha chain that participates in the antigen recognition. Alpha-beta T cell receptors are antigen specific receptors which are essential to the immune response and are present on the cell surface of T lymphocytes. Recognize peptide-major histocompatibility (MH) (pMH) complexes that are displayed by antigen presenting cells (APC), a prerequisite for efficient T cell adaptive immunity against pathogens. Binding of alpha-beta TR to pMH complex initiates TR-CD3 clustering on the cell surface and intracellular activation of LCK that phosphorylates the ITAM motifs of CD3G, CD3D, CD3E and CD247 enabling the recruitment of ZAP70. In turn ZAP70 phosphorylates LAT, which recruits numerous signaling molecules to form the LAT signalosome. The LAT signalosome propagates signal branching to three major signaling pathways, the calcium, the mitogen-activated protein kinase (MAPK) kinase and the nuclear factor-kappa-B (NF-kB) pathways, leading to the mobilization of transcription factors that are critical for gene expression and essential for T cell growth and differentiation. The T cell repertoire is generated in the thymus, by V-(D)-J rearrangement. This repertoire is then shaped by intrathymic selection events to generate a peripheral T cell pool of self-MH restricted, non-autoaggressive T cells. Post-thymic interaction of alpha-beta TR with the pMH complexes shapes TR structural and functional avidity. In Homo sapiens (Human), this protein is T cell receptor alpha variable 8-4.